The following is a 268-amino-acid chain: Tryptophan synthase alpha chain (268 aa).

Residues glutamate 49 and aspartate 60 each act as proton acceptor in the active site.

Belongs to the TrpA family. Tetramer of two alpha and two beta chains.

It carries out the reaction (1S,2R)-1-C-(indol-3-yl)glycerol 3-phosphate + L-serine = D-glyceraldehyde 3-phosphate + L-tryptophan + H2O. It participates in amino-acid biosynthesis; L-tryptophan biosynthesis; L-tryptophan from chorismate: step 5/5. The alpha subunit is responsible for the aldol cleavage of indoleglycerol phosphate to indole and glyceraldehyde 3-phosphate. The sequence is that of Tryptophan synthase alpha chain from Yersinia pseudotuberculosis serotype O:1b (strain IP 31758).